A 373-amino-acid polypeptide reads, in one-letter code: Protodeoxyviolaceinate monooxygenase (373 aa).

An FAD-binding site is contributed by 2–20 (KILVIGAGPAGLVFASQLK).

FAD is required as a cofactor.

It catalyses the reaction protodeoxyviolaceinate + NADH + O2 + H(+) = protoviolaceinate + NAD(+) + H2O. The enzyme catalyses protodeoxyviolaceinate + NADPH + O2 + H(+) = protoviolaceinate + NADP(+) + H2O. Its pathway is pigment biosynthesis; violacein biosynthesis. Catalyzes the oxygenation of the 6-position of protodeoxyviolaceinate to form proviolacein. In Chromobacterium violaceum (strain ATCC 12472 / DSM 30191 / JCM 1249 / CCUG 213 / NBRC 12614 / NCIMB 9131 / NCTC 9757 / MK), this protein is Protodeoxyviolaceinate monooxygenase (vioD).